We begin with the raw amino-acid sequence, 311 residues long: Histidine decarboxylase proenzyme (311 aa).

Substrate is bound by residues Asp-64 and Ser-82. Ser-83 carries the post-translational modification Pyruvic acid (Ser). Glu-198 (proton donor) is an active-site residue.

In terms of assembly, the proenzyme is a hexamer of identical pi chains; each pi chain monomer is cleaved to form a small (or beta) chain and a large (or alpha) chain by non-hydrolytic self-catalysis. It depends on pyruvate as a cofactor.

It catalyses the reaction L-histidine + H(+) = histamine + CO2. The sequence is that of Histidine decarboxylase proenzyme (hdcA) from Lactobacillus sp. (strain 30a).